Here is an 83-residue protein sequence, read N- to C-terminus: ATP synthase subunit c (83 aa).

2 helical membrane-spanning segments follow: residues 10 to 30 (IAVA…FGLL) and 52 to 72 (MFIV…IALF).

The protein belongs to the ATPase C chain family. F-type ATPases have 2 components, F(1) - the catalytic core - and F(0) - the membrane proton channel. F(1) has five subunits: alpha(3), beta(3), gamma(1), delta(1), epsilon(1). F(0) has three main subunits: a(1), b(2) and c(10-14). The alpha and beta chains form an alternating ring which encloses part of the gamma chain. F(1) is attached to F(0) by a central stalk formed by the gamma and epsilon chains, while a peripheral stalk is formed by the delta and b chains.

The protein resides in the cell inner membrane. In terms of biological role, f(1)F(0) ATP synthase produces ATP from ADP in the presence of a proton or sodium gradient. F-type ATPases consist of two structural domains, F(1) containing the extramembraneous catalytic core and F(0) containing the membrane proton channel, linked together by a central stalk and a peripheral stalk. During catalysis, ATP synthesis in the catalytic domain of F(1) is coupled via a rotary mechanism of the central stalk subunits to proton translocation. Functionally, key component of the F(0) channel; it plays a direct role in translocation across the membrane. A homomeric c-ring of between 10-14 subunits forms the central stalk rotor element with the F(1) delta and epsilon subunits. The sequence is that of ATP synthase subunit c from Shewanella baltica (strain OS223).